The primary structure comprises 118 residues: Large ribosomal subunit protein bL20 (118 aa).

Belongs to the bacterial ribosomal protein bL20 family.

Its function is as follows. Binds directly to 23S ribosomal RNA and is necessary for the in vitro assembly process of the 50S ribosomal subunit. It is not involved in the protein synthesizing functions of that subunit. The chain is Large ribosomal subunit protein bL20 from Shewanella baltica (strain OS223).